Consider the following 834-residue polypeptide: Periplasmic nitrate reductase (834 aa).

The tat-type signal signal peptide spans 1-29 (MSLTRRQFAKANAAAIAATVAGMPIASTA). The region spanning 41 to 97 (LKWDKAPCRFCGTGCGVMVATRENRVVATHGDVKADVNRGINCVKGYFLSKIMYGTD) is the 4Fe-4S Mo/W bis-MGD-type domain. [4Fe-4S] cluster is bound by residues C48, C51, C55, and C83. Residues K85, Q152, N177, C181, 214–221 (WGSNMAEM), 245–249 (STFEH), 264–266 (QTD), M375, Q379, N485, 511–512 (SD), K534, D561, and 721–730 (TGRVLEHWHT) contribute to the Mo-bis(molybdopterin guanine dinucleotide) site. F797 serves as a coordination point for substrate. Residues N805 and K822 each contribute to the Mo-bis(molybdopterin guanine dinucleotide) site.

Belongs to the prokaryotic molybdopterin-containing oxidoreductase family. NasA/NapA/NarB subfamily. As to quaternary structure, component of the periplasmic nitrate reductase NapAB complex composed of NapA and NapB. It depends on [4Fe-4S] cluster as a cofactor. The cofactor is Mo-bis(molybdopterin guanine dinucleotide). Predicted to be exported by the Tat system. The position of the signal peptide cleavage has not been experimentally proven.

Its subcellular location is the periplasm. It catalyses the reaction 2 Fe(II)-[cytochrome] + nitrate + 2 H(+) = 2 Fe(III)-[cytochrome] + nitrite + H2O. Catalytic subunit of the periplasmic nitrate reductase complex NapAB. Receives electrons from NapB and catalyzes the reduction of nitrate to nitrite. This Stutzerimonas stutzeri (Pseudomonas stutzeri) protein is Periplasmic nitrate reductase.